The sequence spans 257 residues: Fimbrial assembly protein, serogroup I (257 aa).

The chain is Fimbrial assembly protein, serogroup I (fimB) from Dichelobacter nodosus (Bacteroides nodosus).